The primary structure comprises 253 residues: Precorrin-4 C(11)-methyltransferase (253 aa).

This sequence belongs to the precorrin methyltransferase family.

The enzyme catalyses precorrin-4 + S-adenosyl-L-methionine = precorrin-5 + S-adenosyl-L-homocysteine. The protein operates within cofactor biosynthesis; adenosylcobalamin biosynthesis; cob(II)yrinate a,c-diamide from precorrin-2 (aerobic route): step 4/10. Its function is as follows. Catalyzes the methylation of C-11 in precorrin-4 to form precorrin-5. In Sinorhizobium sp, this protein is Precorrin-4 C(11)-methyltransferase (cobM).